The sequence spans 98 residues: mRNA interferase toxin MqsR (98 aa).

Might be a dimer. Also reported to be a monomer. Crystallizes as a heterotetramer with MqsA, MqsR-MqsA(2)-MqsR. Purifies as a possible heterohexamer of 2 MqsR dimers and 1 MqsA dimer. When the 2 dissociate the MsqR mRNA interferase becomes active.

Toxic component of a type II toxin-antitoxin (TA) system. Plays a significant role in the control of biofilm formation and induction of persister cells in the presence of antibiotics. An mRNA interferase which has been reported to be translation-independent. It has also been reported to be translation-dependent. Cleavage has been reported to occur on either side of G in the sequence GCU. Also reported to cleave after C in GC(A/U) sequences. There are only 14 genes in E.coli W3110 (and probably also MG1655) that do not have a GCU sequence and thus are resistant to the mRNA interferase activity; among these is the gene for toxin GhoT. Overexpression of MqsR causes cessation of cell growth and inhibits cell proliferation via inhibition of translation as well as increasing persister cell formation; these effects are overcome by concomitant or subsequent expression of antitoxin MqsA. Cross-talk can occur between different TA systems. Ectopic expression of this toxin induces transcription of the relBEF TA system operon with specific cleavage of the relBEF mRNA produced. Regulates the expression of GhoT/GhoS, a type V TA system. Persistence depends on toxin GhoT activity, which MqsR controls at the post-transcriptional level by selectively degrading the antitoxin ghoS segment of the ghoST mRNA. Overexpression leads to a dramatic increase in tolerance to the antibiotic ofloxacin. This TA system mediates cell growth during bile acid deoxycholate stress by degrading mRNA for probable deoxycholate-binding protein YgiS; bile acid detergents such as deoxycholate are important for host defense against bacterial growth in the gall bladder and duodenum. Functionally, initially reported to act as a cotranscription factor with MqsA. Following further experiments, the MqsR-MqsA complex does not bind DNA and all reported data are actually due to a small fraction of free MqsA alone binding DNA. Addition of MqsR to a preformed MqsA-promoter DNA complex causes dissociation of the MqsA-DNA complex, probably causing derepression of MqsA-repressed transcripts. Does not bind DNA in the presence or absence of MqsA. This is mRNA interferase toxin MqsR from Escherichia coli (strain K12).